Reading from the N-terminus, the 101-residue chain is Large ribosomal subunit protein uL23c (101 aa).

Belongs to the universal ribosomal protein uL23 family. In terms of assembly, part of the 50S ribosomal subunit.

It is found in the plastid. The protein localises to the chloroplast. Functionally, binds to 23S rRNA. In Cyanidium caldarium (Red alga), this protein is Large ribosomal subunit protein uL23c (rpl23).